Reading from the N-terminus, the 972-residue chain is 116 kDa U5 small nuclear ribonucleoprotein component (972 aa).

Position 1 is an N-acetylmethionine (Met-1). The interval 1-53 (MDTDLYDEFGNYIGPELDSDEDDDELGRETKDLDEVDEDEDDDDVGDHDEDHP) is disordered. 2 stretches are compositionally biased toward acidic residues: residues 17–26 (LDSDEDDDEL) and 34–48 (DEVDEDEDDDDVGDH). Ser-19 bears the Phosphoserine mark. Lys-64 participates in a covalent cross-link: Glycyl lysine isopeptide (Lys-Gly) (interchain with G-Cter in SUMO1); alternate. Residue Lys-64 forms a Glycyl lysine isopeptide (Lys-Gly) (interchain with G-Cter in SUMO2); alternate linkage. Thr-86 carries the phosphothreonine modification. The tr-type G domain maps to 127–409 (ELIRNVTLCG…GIHLTKEELK (283 aa)). GTP is bound by residues 136–143 (GHLHHGKT), 204–208 (DTPGH), and 258–261 (NKID).

This sequence belongs to the TRAFAC class translation factor GTPase superfamily. Classic translation factor GTPase family. EF-G/EF-2 subfamily. As to quaternary structure, component of the U5 snRNP and the U4/U6-U5 tri-snRNP complex, a building block of the spliceosome. The U4/U6-U5 tri-snRNP complex is composed of the U4, U6 and U5 snRNAs and at least PRPF3, PRPF4, PRPF6, PRPF8, PRPF31, SNRNP200, TXNL4A, SNRNP40, DDX23, CD2BP2, PPIH, SNU13, EFTUD2, SART1 and USP39. Component of the pre-catalytic, catalytic and post-catalytic spliceosome complexes. Component of the minor spliceosome, which splices U12-type introns. Within this complex, interacts with CRIPT. Interacts with ERBB4 and PRPF8. Interacts with PIH1D1. Interacts with RPAP3 and URI1 in a ZNHIT2-dependent manner. Interacts with NRDE2. Interacts with FAM50A. Interacts with UBL5.

It localises to the nucleus. In terms of biological role, required for pre-mRNA splicing as component of the spliceosome, including pre-catalytic, catalytic and post-catalytic spliceosomal complexes. Component of the U5 snRNP and the U4/U6-U5 tri-snRNP complex, a building block of the spliceosome. As a component of the minor spliceosome, involved in the splicing of U12-type introns in pre-mRNAs. This chain is 116 kDa U5 small nuclear ribonucleoprotein component (EFTUD2), found in Bos taurus (Bovine).